The sequence spans 2139 residues: Voltage-dependent L-type calcium channel subunit alpha-1C (2139 aa).

Positions 1–20 (MVNENTRMYVPEENHQGSNY) are disordered. Over 1–124 (MVNENTRMYV…RACISIVEWK (124 aa)) the chain is Cytoplasmic. The calmodulin-binding stretch occupies residues 47-68 (GAALSWQAAIDAARQAKLMGSA). The tract at residues 73–98 (ISTVSSTQRKRQQYGKPKKQGGTTAT) is disordered. Residues 80–91 (QRKRQQYGKPKK) are compositionally biased toward basic residues. An I repeat occupies 111 to 408 (NPIRRACISI…LVLGVLSGEF (298 aa)). The helical transmembrane segment at 125–143 (PFEIIILLTIFANCVALAI) threads the bilayer. The Extracellular segment spans residues 144–158 (YIPFPEDDSNATNSN). A glycan (N-linked (GlcNAc...) asparagine) is linked at asparagine 153. Residues 159–179 (LERVEYLFLIIFTVEAFLKVI) traverse the membrane as a helical segment. The Cytoplasmic segment spans residues 180–188 (AYGLLFHPN). Residues 189–209 (AYLRNGWNLLDFIIVVVGLFS) form a helical membrane-spanning segment. Topologically, residues 210-232 (AILEQATKADGANALGGKGAGFD) are extracellular. Residues 233 to 251 (VKALRAFRVLRPLRLVSGV) traverse the membrane as a helical segment. Topologically, residues 252–268 (PSLQVVLNSIIKAMVPL) are cytoplasmic. A helical membrane pass occupies residues 269-290 (LHIALLVLFVIIIYAIIGLELF). Topologically, residues 291–350 (MGKMHKTCYNQEGIIDVPAEEDPSPCALETGHGRQCQNGTVCKPGWDGPKHGITNFDNFA) are extracellular. 2 disulfide bridges follow: cysteine 298-cysteine 326 and cysteine 316-cysteine 332. The N-linked (GlcNAc...) asparagine glycan is linked to asparagine 328. An intramembrane region (pore-forming) is located at residues 351-372 (FAMLTVFQCITMEGWTDVLYWM). A Selectivity filter of repeat I motif is present at residues 361 to 364 (TMEG). Glutamate 363 is a binding site for Ca(2+). Residues 373-380 (QDAMGYEL) lie on the Extracellular side of the membrane. A helical transmembrane segment spans residues 381–401 (PWVYFVSLVIFGSFFVLNLVL). The Cytoplasmic segment spans residues 402–524 (GVLSGEFSKE…RKCRAAVKSN (123 aa)). Residues 428–445 (QQLEEDLKGYLDWITQAE) form an AID/alpha-interaction domain; mediates interaction with the beta subunit region. Positions 449–481 (PENEDEGMDEDKPRNMSMPTSETESVNTENVAG) are disordered. The span at 465–478 (SMPTSETESVNTEN) shows a compositional bias: polar residues. Residue serine 469 is modified to Phosphoserine. Threonine 476 is modified (phosphothreonine). One copy of the II repeat lies at 510 to 756 (NRFCRRKCRA…VFLAIAVDNL (247 aa)). Residues 525–543 (VFYWLVIFLVFLNTLTIAS) traverse the membrane as a helical segment. Residues 544 to 554 (EHYNQPHWLTE) lie on the Extracellular side of the membrane. A helical membrane pass occupies residues 555–575 (VQDTANKALLALFTAEMLLKM). Over 576 to 586 (YSLGLQAYFVS) the chain is Cytoplasmic. A helical membrane pass occupies residues 587 to 606 (LFNRFDCFIVCGGILETILV). The Extracellular portion of the chain corresponds to 607–615 (ETKIMSPLG). Residues 616-634 (ISVLRCVRLLRIFKITRYW) traverse the membrane as a helical segment. At 635 to 653 (NSLSNLVASLLNSVRSIAS) the chain is on the cytoplasmic side. Residues 654 to 673 (LLLLLFLFIIIFSLLGMQLF) traverse the membrane as a helical segment. The Extracellular portion of the chain corresponds to 674 to 693 (GGKFNFDEMQTRRSTFDNFP). An intramembrane region (pore-forming) is located at residues 694-715 (QSLLTVFQILTGEDWNSVMYDG). A Selectivity filter of repeat II motif is present at residues 704–707 (TGED). Residue glutamate 706 coordinates Ca(2+). Residues 716 to 725 (IMAYGGPSFP) lie on the Extracellular side of the membrane. A helical transmembrane segment spans residues 726–745 (GMLVCIYFIILFICGNYILL). Residues 746–900 (NVFLAIAVDN…LQCHRIVNDT (155 aa)) are Cytoplasmic-facing. The interval 764-861 (SAQKEEEEEK…EMPVGPRPRP (98 aa)) is disordered. Residues 783-806 (SPEKKQEVMEKPAVEESKEEKIEL) show a composition bias toward basic and acidic residues. Serine 808 and serine 815 each carry phosphoserine. Residues 829–876 (SENEDKSPHSNPDTAGEEDEEEPEMPVGPRPRPLSELHLKEKAVPMPE) are interaction with STAC2. The segment covering 843 to 852 (AGEEDEEEPE) has biased composition (acidic residues). An III repeat occupies 887–1169 (NRFRLQCHRI…IFVGFVIVTF (283 aa)). Residues 901 to 919 (IFTNLILFFILLSSISLAA) traverse the membrane as a helical segment. At 920–931 (EDPVQHTSFRNH) the chain is on the extracellular side. A helical membrane pass occupies residues 932-951 (ILGNADYVFTSIFTLEIILK). Over 952–967 (MTAYGAFLHKGSFCRN) the chain is Cytoplasmic. A helical transmembrane segment spans residues 968 to 986 (YFNILDLLVVSVSLISFGI). The Extracellular segment spans residues 987-993 (QSSAINV). Residues 994 to 1012 (VKILRVLRVLRPLRAINRA) form a helical membrane-spanning segment. Over 1013-1031 (KGLKHVVQCVFVAIRTIGN) the chain is Cytoplasmic. The chain crosses the membrane as a helical span at residues 1032–1051 (IVIVTTLLQFMFACIGVQLF). Residues 1052–1101 (KGKLYTCSDSSKQTEAECKGNYITYKDGEVDHPIIQPRSWENSKFDFDNV) are Extracellular-facing. A disulfide bridge connects residues cysteine 1058 and cysteine 1069. The interval 1089-1178 (RSWENSKFDF…FQEQGEQEYK (90 aa)) is dihydropyridine binding. The segment at residues 1102–1122 (LAAMMALFTVSTFEGWPELLY) is an intramembrane region (pore-forming). The Selectivity filter of repeat III motif lies at 1113–1116 (TFEG). Glutamate 1115 is a Ca(2+) binding site. Topologically, residues 1123–1139 (RSIDSHTEDKGPIYNYR) are extracellular. The helical transmembrane segment at 1140–1161 (VEISIFFIIYIIIIAFFMMNIF) threads the bilayer. Residues 1162–1219 (VGFVIVTFQEQGEQEYKNCELDKNQRQCVEYALKARPLRRYIPKNQHQYKVWYVVNST) lie on the Cytoplasmic side of the membrane. An IV repeat occupies 1206 to 1479 (NQHQYKVWYV…LFVAVIMDNF (274 aa)). The chain crosses the membrane as a helical span at residues 1220-1241 (YFEYLMFVLILLNTICLAMQHY). Over 1242 to 1249 (GQSCLFKI) the chain is Extracellular. The helical transmembrane segment at 1250–1271 (AMNILNMLFTGLFTVEMILKLI) threads the bilayer. At 1272-1281 (AFKPKGYFSD) the chain is on the cytoplasmic side. Residues 1282 to 1301 (PWNVFDFLIVIGSIIDVILS) form a helical membrane-spanning segment. The Extracellular portion of the chain corresponds to 1302–1324 (ETNPAEHTQCSPSMSAEENSRIS). Residues 1325 to 1343 (ITFFRLFRVMRLVKLLSRG) form a helical membrane-spanning segment. Residues 1344-1361 (EGIRTLLWTFIKSFQALP) lie on the Cytoplasmic side of the membrane. A helical transmembrane segment spans residues 1362-1382 (YVALLIVMLFFIYAVIGMQVF). Over 1383-1404 (GKIALNDTTEINRNNNFQTFPQ) the chain is Extracellular. Residue asparagine 1388 is glycosylated (N-linked (GlcNAc...) asparagine). The pore-forming intramembrane region spans 1405–1423 (AVLLLFRCATGEAWQDIML). The short motif at 1414-1417 (TGEA) is the Selectivity filter of repeat IV element. Over 1424-1451 (ACMPGKKCAPESEPSNSTEGETPCGSSF) the chain is Extracellular. Residues 1430 to 1498 (KCAPESEPSN…LGPHHLDEFK (69 aa)) form a dihydropyridine binding region. Cysteines 1431 and 1447 form a disulfide. Asparagine 1439 carries an N-linked (GlcNAc...) asparagine glycan. A phenylalkylamine binding region spans residues 1444–1486 (ETPCGSSFAVFYFISFYMLCAFLIINLFVAVIMDNFDYLTRDW). Residues 1452 to 1476 (AVFYFISFYMLCAFLIINLFVAVIM) traverse the membrane as a helical segment. Residues 1477 to 2139 (DNFDYLTRDW…ADSRSYVSNL (663 aa)) lie on the Cytoplasmic side of the membrane. Residues 1611 to 1638 (DEVTVGKFYATFLIQEYFRKFKKRKEQG) are important for interaction with STAC1, STAC2 and STAC3. The segment at 1611 to 1644 (DEVTVGKFYATFLIQEYFRKFKKRKEQGLVGKPS) is calmodulin-binding. The calmodulin-binding IQ region stretch occupies residues 1617 to 1637 (KFYATFLIQEYFRKFKKRKEQ). The interval 1651 to 1670 (LQAGLRTLHDIGPEIRRAIS) is important for localization in at the junctional membrane. A phosphoserine mark is found at serine 1670 and serine 1691. Polar residues-rich tracts occupy residues 1732-1741 (KTGNNQADTE) and 1751-1763 (STFT…STGS). The segment at 1732–1773 (KTGNNQADTESPSHEKLVDSTFTPSSYSSTGSNANINNANNT) is disordered. Low complexity predominate over residues 1764–1773 (NANINNANNT). Serine 1897 carries the post-translational modification Phosphoserine; by PKA. Residues 1940-1966 (RSHSPTTFPRPCPTPPVTPGSRGRPLR) are disordered. Positions 1947–1957 (FPRPCPTPPVT) are enriched in pro residues.

It belongs to the calcium channel alpha-1 subunit (TC 1.A.1.11) family. CACNA1C subfamily. As to quaternary structure, component of a calcium channel complex consisting of a pore-forming alpha subunit (CACNA1C) and ancillary beta, gamma and delta subunits. The channel complex contains alpha, beta, gamma and delta subunits in a 1:1:1:1 ratio, i.e. it contains only one of each type of subunit. CACNA1C channel activity is modulated by ancillary subunits, such as CACNB1, CACNB2, CACNB3, CACNA2D1 and CACNA2D4. Interacts with the gamma subunits CACNG4, CACNG6, CACNG7 and CACNG8. Interacts with CACNB1. Interacts with CACNB2. Identified in a complex with CACNA2D4 and CACNB3. Interacts with CACNB3. Interacts with CACNA2D1. Interacts with CACNA2D4. Interacts with CALM1. Interacts (via the N-terminus and the C-terminal C and IQ motifs) with CABP1; this inhibits Ca(2+)-dependent channel inactivation. The binding via the C motif is calcium independent whereas the binding via IQ requires the presence of calcium and is mutually exclusive with calmodulin binding. The binding to the cytoplasmic N-terminal domain is calcium independent but is essential for the channel modulation. Interacts (via C-terminal CDB motif) with CABP5; in a calcium-dependent manner. Interacts with CIB1; the interaction increases upon cardiomyocytes hypertrophy. Interacts with STAC2 and STAC3; this inhibits channel inactivation. Post-translationally, phosphorylation by PKA at Ser-1897 activates the channel. Elevated levels of blood glucose lead to increased phosphorylation by PKA. In terms of tissue distribution, detected in embryonic heart. Detected in retina in rod bipolar cells. Detected in tibialis artery (at protein level). Detected in smooth muscle cells from tibialis artery and in mesenteric artery. High expression in heart, followed by brain and spinal cord.

Its subcellular location is the cell membrane. The protein localises to the sarcolemma. It is found in the perikaryon. It localises to the postsynaptic density membrane. The protein resides in the cell projection. Its subcellular location is the dendrite. The protein localises to the T-tubule. The enzyme catalyses Ca(2+)(in) = Ca(2+)(out). Inhibited by dihydropyridines (DHP), such as isradipine. Inhibited by nifedipine. Channel activity is regulated by Ca(2+) and calmodulin. Binding of STAC1, STAC2 or STAC3 to a region that overlaps with the calmodulin binding site inhibits channel inactivation by Ca(2+) and calmodulin. Binding of calmodulin or CABP1 at the same regulatory sites results in opposite effects on the channel function. Shear stress and pressure increases calcium channel activity. In terms of biological role, pore-forming, alpha-1C subunit of the voltage-gated calcium channel that gives rise to L-type calcium currents. Mediates influx of calcium ions into the cytoplasm, and thereby triggers calcium release from the sarcoplasm. Plays an important role in excitation-contraction coupling in the heart. Required for normal heart development and normal regulation of heart rhythm. Required for normal contraction of smooth muscle cells in blood vessels and in the intestine. Essential for normal blood pressure regulation via its role in the contraction of arterial smooth muscle cells. Long-lasting (L-type) calcium channels belong to the 'high-voltage activated' (HVA) group. The protein is Voltage-dependent L-type calcium channel subunit alpha-1C (Cacna1c) of Mus musculus (Mouse).